The following is a 144-amino-acid chain: Large ribosomal subunit protein uL16 (144 aa).

Residues 1–19 (MLLPKRVKYRRQHRPKTTG) show a composition bias toward basic residues. The segment at 1-26 (MLLPKRVKYRRQHRPKTTGRSKGGNE) is disordered.

The protein belongs to the universal ribosomal protein uL16 family. Part of the 50S ribosomal subunit.

Its function is as follows. Binds 23S rRNA and is also seen to make contacts with the A and possibly P site tRNAs. This chain is Large ribosomal subunit protein uL16, found in Macrococcus caseolyticus (strain JCSC5402) (Macrococcoides caseolyticum).